A 240-amino-acid chain; its full sequence is Phosphoribosylaminoimidazole-succinocarboxamide synthase (240 aa).

This sequence belongs to the SAICAR synthetase family.

The catalysed reaction is 5-amino-1-(5-phospho-D-ribosyl)imidazole-4-carboxylate + L-aspartate + ATP = (2S)-2-[5-amino-1-(5-phospho-beta-D-ribosyl)imidazole-4-carboxamido]succinate + ADP + phosphate + 2 H(+). It participates in purine metabolism; IMP biosynthesis via de novo pathway; 5-amino-1-(5-phospho-D-ribosyl)imidazole-4-carboxamide from 5-amino-1-(5-phospho-D-ribosyl)imidazole-4-carboxylate: step 1/2. This chain is Phosphoribosylaminoimidazole-succinocarboxamide synthase, found in Wolbachia pipientis subsp. Culex pipiens (strain wPip).